The primary structure comprises 858 residues: Zinc finger protein ZXDC (858 aa).

Disordered stretches follow at residues 1–127 (MDLP…APAG) and 151–174 (PGPATAGAAAPRRAPQASGPSTPG). 3 stretches are compositionally biased toward low complexity: residues 23-35 (PLRRAPAPLGASP), 84-97 (GGAAAEAAGSQEAE), and 151-171 (PGPATAGAAAPRRAPQASGPS). Serine 34 is modified (phosphoserine). Threonine 172 bears the Phosphothreonine mark. 10 C2H2-type zinc fingers span residues 175-199 (YRCPEPQCALAFAKKHQLKVHLLTH), 208-232 (FKCPLEGCGWAFTTSYKLKRHLQSH), 238-262 (FGCPVGGCGKKFTTVYNLKAHMKGH), 268-290 (FKCEVCAERFPTHAKLSSHQRSH), 297-321 (YKCDFPGCEKTFITVSALFSHNRAH), 328-352 (FSCSFPGCSKQYDKACRLKIHLRSH), 358-382 (FICDSDSCGWTFTSMSKLLRHRRKH), 388-412 (FTCPVEGCGKSFTRAEHLKGHSITH), 418-442 (FECPVEGCCARFSARSSLYIHSKKH), and 451-476 (SRCPVSTCNRLFTSKHSMKAHMVRQH). The tract at residues 579 to 688 (DSPLVLGTAA…HGLPQSTLPS (110 aa)) is required for transcriptional activation. Residue lysine 660 forms a Glycyl lysine isopeptide (Lys-Gly) (interchain with G-Cter in SUMO) linkage. Disordered stretches follow at residues 660 to 696 (KVEPDSPSRPGAVGQQEGSHGLPQSTLPSPAEQHGAQ), 726 to 756 (KEKKQRGAGSNAGASQSTQRKIKEGKMSPPH), and 837 to 858 (GGPAGPEATQFPGSTINLQDLQ). Phosphoserine is present on serine 665. The segment covering 675-687 (QEGSHGLPQSTLP) has biased composition (polar residues). The interval 781–858 (PAAGVQCGAQ…GSTINLQDLQ (78 aa)) is interaction with CIITA. Positions 847-858 (FPGSTINLQDLQ) are enriched in polar residues.

The protein belongs to the ZXD family. As to quaternary structure, self-associates. Interacts with ZXDA and CIITA. In terms of processing, sumoylated at Lys-660 with SUMO1, SUMO2 and SUMO3; sumoylation enhances the activity of the transcriptional activation domain. As to expression, expressed at high levels in heart, kidney, liver and testis, at moderate levels in brain and stomach, and at low levels in lung, muscle, placenta, small intestine and spleen.

The protein localises to the nucleus. Functionally, cooperates with CIITA to promote transcription of MHC class I and MHC class II genes. The sequence is that of Zinc finger protein ZXDC (ZXDC) from Homo sapiens (Human).